Consider the following 573-residue polypeptide: 2-succinyl-5-enolpyruvyl-6-hydroxy-3-cyclohexene-1-carboxylate synthase (573 aa).

Belongs to the TPP enzyme family. MenD subfamily. As to quaternary structure, homodimer. Requires Mg(2+) as cofactor. Mn(2+) serves as cofactor. It depends on thiamine diphosphate as a cofactor.

The enzyme catalyses isochorismate + 2-oxoglutarate + H(+) = 5-enolpyruvoyl-6-hydroxy-2-succinyl-cyclohex-3-ene-1-carboxylate + CO2. The protein operates within quinol/quinone metabolism; 1,4-dihydroxy-2-naphthoate biosynthesis; 1,4-dihydroxy-2-naphthoate from chorismate: step 2/7. It participates in quinol/quinone metabolism; menaquinone biosynthesis. In terms of biological role, catalyzes the thiamine diphosphate-dependent decarboxylation of 2-oxoglutarate and the subsequent addition of the resulting succinic semialdehyde-thiamine pyrophosphate anion to isochorismate to yield 2-succinyl-5-enolpyruvyl-6-hydroxy-3-cyclohexene-1-carboxylate (SEPHCHC). In Shewanella sp. (strain ANA-3), this protein is 2-succinyl-5-enolpyruvyl-6-hydroxy-3-cyclohexene-1-carboxylate synthase.